We begin with the raw amino-acid sequence, 149 residues long: Gonadotropin subunit beta-2 (149 aa).

The first 24 residues, 1–24, serve as a signal peptide directing secretion; it reads MARIPECTILLLLCMCVLAVPAQC. 6 disulfide bridges follow: C30/C78, C44/C93, C47/C131, C55/C109, C59/C111, and C114/C121. N34 is a glycosylation site (N-linked (GlcNAc...) asparagine).

This sequence belongs to the glycoprotein hormones subunit beta family. Heterodimer of an alpha and a beta chain.

The protein localises to the secreted. Involved in gametogenesis and steroidogenesis. In Clupea pallasii (Pacific herring), this protein is Gonadotropin subunit beta-2 (cgbb).